The sequence spans 67 residues: DNA-directed RNA polymerase subunit omega (67 aa).

This sequence belongs to the RNA polymerase subunit omega family. The RNAP catalytic core consists of 2 alpha, 1 beta, 1 beta' and 1 omega subunit. When a sigma factor is associated with the core the holoenzyme is formed, which can initiate transcription.

The enzyme catalyses RNA(n) + a ribonucleoside 5'-triphosphate = RNA(n+1) + diphosphate. Functionally, promotes RNA polymerase assembly. Latches the N- and C-terminal regions of the beta' subunit thereby facilitating its interaction with the beta and alpha subunits. This chain is DNA-directed RNA polymerase subunit omega, found in Polaromonas sp. (strain JS666 / ATCC BAA-500).